Here is a 187-residue protein sequence, read N- to C-terminus: Ribosome-recycling factor (187 aa).

The protein belongs to the RRF family.

Its subcellular location is the cytoplasm. Responsible for the release of ribosomes from messenger RNA at the termination of protein biosynthesis. May increase the efficiency of translation by recycling ribosomes from one round of translation to another. This is Ribosome-recycling factor from Bradyrhizobium sp. (strain BTAi1 / ATCC BAA-1182).